The following is a 246-amino-acid chain: MENDQDQQQQQQQSQQQQPQQEEQEQVDVDLSSLQGQERIEYINTLIADSYNIAIAKKLEEFLDIQINENTYLFQANSTLLKLYQFNPTHLNKDSIAKMLAKALMNFPCNDFLFLSYMIPSIIQKEEPLLKLFILNNFLETCKFKEAWTHINSHSFFSEIPSFIDNIRNFISGVLSITYQNISITMLGELLNLSDRTQLVDYIQSKQPTWKISDSTVSLQSDNSKQKKADTFTFDQLSRILPTFIK.

Residues 1-21 are compositionally biased toward low complexity; the sequence is MENDQDQQQQQQQSQQQQPQQ. The tract at residues 1–30 is disordered; that stretch reads MENDQDQQQQQQQSQQQQPQQEEQEQVDVD. Residues 72–235 enclose the PCI domain; sequence YLFQANSTLL…QKKADTFTFD (164 aa).

Belongs to the eIF-3 subunit K family. As to quaternary structure, component of the eukaryotic translation initiation factor 3 (eIF-3) complex.

The protein localises to the cytoplasm. Functionally, component of the eukaryotic translation initiation factor 3 (eIF-3) complex, which is involved in protein synthesis of a specialized repertoire of mRNAs and, together with other initiation factors, stimulates binding of mRNA and methionyl-tRNAi to the 40S ribosome. The eIF-3 complex specifically targets and initiates translation of a subset of mRNAs involved in cell proliferation. The sequence is that of Eukaryotic translation initiation factor 3 subunit K (eif3K) from Dictyostelium discoideum (Social amoeba).